Reading from the N-terminus, the 245-residue chain is MDDTSTLIDVKEYPDTEVQKNRVLTLEEWREKWVDGKIGFHQEQGHQLLKKHLDTFLKGENVLRVFFPLCGKAVEMKWFADRGHCVVGVEISELGIREFFTEQNLSYSEEPIMEIPGAKVFKSSSGNISLYCCNLFDLPRVNIGKFDRIWDRGALVAVNPGDRKCYTDIMLSLTRKGFRYLLAVLSYDPTKHPGPPFYVPDAEIKNLFGSTCNIHCLEKVDVFEERHKSWGIDYIVEKLYLLTEK.

29–40 (WREKWVDGKIGF) serves as a coordination point for S-adenosyl-L-methionine. F40 serves as a coordination point for substrate. An N6-acetyllysine modification is found at K58. S-adenosyl-L-methionine is bound by residues L69, E90, and R152.

The protein belongs to the class I-like SAM-binding methyltransferase superfamily. TPMT family. Monomer.

The protein resides in the cytoplasm. The catalysed reaction is S-adenosyl-L-methionine + a thiopurine = S-adenosyl-L-homocysteine + a thiopurine S-methylether.. In Lynx rufus (Bobcat), this protein is Thiopurine S-methyltransferase (TPMT).